The sequence spans 143 residues: MQFNIQEIIKMIPHSYPFLLIDRVTACTPNESVTAIKNVTFNEPFFIGHFPGNPIMPGVLIVEAMAQACIICTMSSMQNYSVYLMSIELAKFRKPVIPGDTLILTVNVVHKRKNTCKFECHAHVEGTLVAEAQILAMTKQNEA.

The active site involves His49.

It belongs to the thioester dehydratase family. FabZ subfamily.

Its subcellular location is the cytoplasm. The enzyme catalyses a (3R)-hydroxyacyl-[ACP] = a (2E)-enoyl-[ACP] + H2O. In terms of biological role, involved in unsaturated fatty acids biosynthesis. Catalyzes the dehydration of short chain beta-hydroxyacyl-ACPs and long chain saturated and unsaturated beta-hydroxyacyl-ACPs. This is 3-hydroxyacyl-[acyl-carrier-protein] dehydratase FabZ from Ehrlichia chaffeensis (strain ATCC CRL-10679 / Arkansas).